The chain runs to 321 residues: Acetyl-coenzyme A carboxylase carboxyl transferase subunit beta, chloroplastic (321 aa).

Positions 47-321 (LWAQCDNCEN…FWFYVLRSSL (275 aa)) constitute a CoA carboxyltransferase N-terminal domain. Residues cysteine 51, cysteine 54, cysteine 70, and cysteine 73 each contribute to the Zn(2+) site. The segment at 51-73 (CDNCENLLYLRFLRENQSVCKEC) adopts a C4-type zinc-finger fold.

This sequence belongs to the AccD/PCCB family. In terms of assembly, acetyl-CoA carboxylase is a heterohexamer composed of biotin carboxyl carrier protein, biotin carboxylase and 2 subunits each of ACCase subunit alpha and ACCase plastid-coded subunit beta (accD). Zn(2+) is required as a cofactor.

Its subcellular location is the plastid. It is found in the chloroplast stroma. It carries out the reaction N(6)-carboxybiotinyl-L-lysyl-[protein] + acetyl-CoA = N(6)-biotinyl-L-lysyl-[protein] + malonyl-CoA. Its pathway is lipid metabolism; malonyl-CoA biosynthesis; malonyl-CoA from acetyl-CoA: step 1/1. Functionally, component of the acetyl coenzyme A carboxylase (ACC) complex. Biotin carboxylase (BC) catalyzes the carboxylation of biotin on its carrier protein (BCCP) and then the CO(2) group is transferred by the transcarboxylase to acetyl-CoA to form malonyl-CoA. The chain is Acetyl-coenzyme A carboxylase carboxyl transferase subunit beta, chloroplastic from Pinus thunbergii (Japanese black pine).